Consider the following 346-residue polypeptide: Selenide, water dikinase (346 aa).

The active site involves Sec-17. A non-standard amino acid (selenocysteine) is located at residue Sec-17. ATP contacts are provided by residues Lys-20 and 47–49 (TSD). Asp-50 contacts Mg(2+). Residues Asp-67, Asp-90, and 138 to 140 (GHT) each bind ATP. Residue Asp-90 coordinates Mg(2+). Position 226 (Asp-226) interacts with Mg(2+).

It belongs to the selenophosphate synthase 1 family. Class I subfamily. Homodimer. Mg(2+) serves as cofactor.

The enzyme catalyses hydrogenselenide + ATP + H2O = selenophosphate + AMP + phosphate + 2 H(+). Functionally, synthesizes selenophosphate from selenide and ATP. The polypeptide is Selenide, water dikinase (Trichlorobacter lovleyi (strain ATCC BAA-1151 / DSM 17278 / SZ) (Geobacter lovleyi)).